The chain runs to 195 residues: ADP-ribosylation factor L (195 aa).

Residue glycine 2 is the site of N-myristoyl glycine attachment. Residues 25–32 (GLENSGKT), 72–76 (DLLYP), and 131–134 (NKQD) contribute to the GTP site.

The protein belongs to the small GTPase superfamily. Arf family.

May be involved in trafficking events within the endosomal system. The sequence is that of ADP-ribosylation factor L (arrL) from Dictyostelium discoideum (Social amoeba).